The primary structure comprises 127 residues: Large ribosomal subunit protein bL19 (127 aa).

It belongs to the bacterial ribosomal protein bL19 family.

In terms of biological role, this protein is located at the 30S-50S ribosomal subunit interface and may play a role in the structure and function of the aminoacyl-tRNA binding site. In Ruegeria pomeroyi (strain ATCC 700808 / DSM 15171 / DSS-3) (Silicibacter pomeroyi), this protein is Large ribosomal subunit protein bL19.